The chain runs to 245 residues: Chloride intracellular channel protein 2 (245 aa).

A required for insertion into the membrane region spans residues M1–P96. E25 serves as a coordination point for glutathione. Residues C30–C33 carry the G-site motif. Residues C30 and C33 are joined by a disulfide bond. Residues F32–I52 form a helical membrane-spanning segment. One can recognise a GST C-terminal domain in the interval N76–Y239. Residue H227 participates in glutathione binding.

It belongs to the chloride channel CLIC family. In terms of assembly, monomer. Interacts with TRAPPC2 and RYR2.

It is found in the cytoplasm. The protein resides in the membrane. It carries out the reaction chloride(in) = chloride(out). The enzyme catalyses tert-butyl hydroperoxide + 2 glutathione = tert-butanol + glutathione disulfide + H2O. The catalysed reaction is cumene hydroperoxide + 2 glutathione = 2-phenylpropan-2-ol + glutathione disulfide + H2O. Its function is as follows. In the soluble state, catalyzes glutaredoxin-like thiol disulfide exchange reactions with reduced glutathione as electron donor. Displays weak glutathione peroxidase activity. Can insert into membranes and form chloride ion channels. Membrane insertion seems to be redox-regulated and may occur only under oxidizing conditions. Modulates the activity of RYR2 and inhibits calcium influx. The protein is Chloride intracellular channel protein 2 of Rattus norvegicus (Rat).